Consider the following 592-residue polypeptide: Aspartate--tRNA ligase (592 aa).

An L-aspartate-binding site is contributed by Glu171. The interval 195 to 198 (QLFK) is aspartate. Arg217 lines the L-aspartate pocket. ATP-binding positions include 217 to 219 (RDE) and Gln226. Residue His448 coordinates L-aspartate. Glu482 is a binding site for ATP. Arg489 is an L-aspartate binding site. 534 to 537 (GLDR) lines the ATP pocket.

It belongs to the class-II aminoacyl-tRNA synthetase family. Type 1 subfamily. As to quaternary structure, homodimer.

The protein resides in the cytoplasm. It catalyses the reaction tRNA(Asp) + L-aspartate + ATP = L-aspartyl-tRNA(Asp) + AMP + diphosphate. Functionally, catalyzes the attachment of L-aspartate to tRNA(Asp) in a two-step reaction: L-aspartate is first activated by ATP to form Asp-AMP and then transferred to the acceptor end of tRNA(Asp). The polypeptide is Aspartate--tRNA ligase (Vibrio campbellii (strain ATCC BAA-1116)).